Reading from the N-terminus, the 193-residue chain is MSTLYHTCDKIEQRIIWIDCEMTGLDVEKQTLCEIALIVTDSELNTIATGPDIVIHQPKEVLDNMEEWPRNTFHENGLMEKIIASKYSMADAENEVIDFLKLHALPGKSPIAGNSIYMDRLFIKKYMPKLDKFAHYRCIDVSTIKGLVQRWYPDYKHPKKQCTHRAFDDIMESIAELKNYRESIFVKSTASSF.

One can recognise an Exonuclease domain in the interval 15–177 (IIWIDCEMTG…DDIMESIAEL (163 aa)). Y136 is a catalytic residue.

Belongs to the oligoribonuclease family.

Its function is as follows. 3'-to-5' exoribonuclease specific for small oligoribonucleotides. The protein is Probable oligoribonuclease of Caenorhabditis elegans.